Consider the following 217-residue polypeptide: Serine acetyltransferase (217 aa).

Belongs to the transferase hexapeptide repeat family.

The protein localises to the cytoplasm. It catalyses the reaction L-serine + acetyl-CoA = O-acetyl-L-serine + CoA. It participates in amino-acid biosynthesis; L-cysteine biosynthesis; L-cysteine from L-serine: step 1/2. With respect to regulation, inhibited by cysteine. Functionally, catalyzes the acetylation of serine by acetyl-CoA to produce O-acetylserine (OAS). The polypeptide is Serine acetyltransferase (Bacillus pumilus (strain SAFR-032)).